A 169-amino-acid chain; its full sequence is MAVKGLGKPDQVYDGSKIRVGIIHARWNRVIIDALVKGAIERMASLGVEENNIIIETVPGSYELPWGTKRFVDRQAKLGKPLDVVIPIGVLIKGSTMHFEYISDSTTHALMNLQEKVDMPVIFGLLTCMTEEQALARAGIDEAHSMHNHGEDWGAAAVEMAVKFGKNAF.

Residues Trp-27, 61 to 63, and 90 to 92 contribute to the 5-amino-6-(D-ribitylamino)uracil site; these read SYE and VLI. A (2S)-2-hydroxy-3-oxobutyl phosphate-binding site is contributed by 95-96; it reads ST. The Proton donor role is filled by His-98. Phe-123 provides a ligand contact to 5-amino-6-(D-ribitylamino)uracil. (2S)-2-hydroxy-3-oxobutyl phosphate is bound at residue Arg-137.

The protein belongs to the DMRL synthase family. In terms of assembly, homopentamer.

It localises to the mitochondrion intermembrane space. It carries out the reaction (2S)-2-hydroxy-3-oxobutyl phosphate + 5-amino-6-(D-ribitylamino)uracil = 6,7-dimethyl-8-(1-D-ribityl)lumazine + phosphate + 2 H2O + H(+). It functions in the pathway cofactor biosynthesis; riboflavin biosynthesis; riboflavin from 2-hydroxy-3-oxobutyl phosphate and 5-amino-6-(D-ribitylamino)uracil: step 1/2. In terms of biological role, catalyzes the formation of 6,7-dimethyl-8-ribityllumazine by condensation of 5-amino-6-(D-ribitylamino)uracil with 3,4-dihydroxy-2-butanone 4-phosphate. This is the penultimate step in the biosynthesis of riboflavin. This is 6,7-dimethyl-8-ribityllumazine synthase (RIB4) from Saccharomyces cerevisiae (strain ATCC 204508 / S288c) (Baker's yeast).